The sequence spans 355 residues: Countin-like protein (355 aa).

Positions 1-27 (MNKSLFSLILLIITIFNLASNINIVSA) are cleaved as a signal peptide. A disordered region spans residues 63 to 83 (NNHEDNNNNNNNNNNNNNAYN). The segment covering 69 to 83 (NNNNNNNNNNNNAYN) has biased composition (low complexity). The Saposin B-type domain maps to 93–177 (GDIECVVCLD…ELITACSTPK (85 aa)). 3 disulfides stabilise this stretch: cysteine 97–cysteine 173, cysteine 100–cysteine 167, and cysteine 128–cysteine 140. N-linked (GlcNAc...) asparagine glycans are attached at residues asparagine 132, asparagine 209, asparagine 242, asparagine 253, asparagine 254, asparagine 282, and asparagine 303. The tract at residues 290–355 (ISNPTPTPTP…SSHYKNKINK (66 aa)) is disordered. Low complexity predominate over residues 301-342 (PSNSTTPTPTPTNSTPTPTSTSTPTSTPTSTPTPTPTSSSST). Positions 345–355 (HSSHYKNKINK) are enriched in basic residues.

The protein belongs to the countin family.

Its subcellular location is the secreted. The sequence is that of Countin-like protein from Dictyostelium discoideum (Social amoeba).